We begin with the raw amino-acid sequence, 436 residues long: Suppressor of cytokine signaling 4 (436 aa).

Residues 1-25 (MAENNSKNVDVRPKTSRSRSADRKD) form a disordered region. Basic and acidic residues predominate over residues 9 to 25 (VDVRPKTSRSRSADRKD). Residues 283-378 (CYWGVMDKYA…FFEPLLSTPL (96 aa)) enclose the SH2 domain. The region spanning 373–422 (LLSTPLIRTFPFSLQHICRTVICNCTTYDGIDALPIPSPMKLYLKEYHYK) is the SOCS box domain.

Its pathway is protein modification; protein ubiquitination. SOCS family proteins form part of a classical negative feedback system that regulates cytokine signal transduction. Substrate-recognition component of a SCF-like ECS (Elongin BC-CUL2/5-SOCS-box protein) E3 ubiquitin-protein ligase complex which mediates the ubiquitination and subsequent proteasomal degradation of target proteins. Inhibits EGF signaling by mediating the degradation of the Tyr-phosphorylated EGF receptor/EGFR. In Mus musculus (Mouse), this protein is Suppressor of cytokine signaling 4 (Socs4).